A 702-amino-acid chain; its full sequence is Phosphoglycerol transferase I (702 aa).

3 consecutive transmembrane segments (helical) span residues 2-22 (HWIL…SPRL), 71-91 (FSGY…PLML), and 103-123 (GGAV…VSPV).

It belongs to the OpgB family.

The protein localises to the cell inner membrane. It carries out the reaction a phosphatidylglycerol + a membrane-derived-oligosaccharide D-glucose = a 1,2-diacyl-sn-glycerol + a membrane-derived-oligosaccharide 6-(glycerophospho)-D-glucose.. It participates in glycan metabolism; osmoregulated periplasmic glucan (OPG) biosynthesis. Transfers a phosphoglycerol residue from phosphatidylglycerol to the membrane-bound nascent glucan backbones. This chain is Phosphoglycerol transferase I, found in Xanthomonas campestris pv. campestris (strain B100).